The primary structure comprises 129 residues: Glycine cleavage system H protein (129 aa).

The Lipoyl-binding domain occupies 24-106; that stretch reads LIRVGISAFA…HGAGWLLVVR (83 aa). Lysine 65 is modified (N6-lipoyllysine).

It belongs to the GcvH family. The glycine cleavage system is composed of four proteins: P, T, L and H. Requires (R)-lipoate as cofactor.

Functionally, the glycine cleavage system catalyzes the degradation of glycine. The H protein shuttles the methylamine group of glycine from the P protein to the T protein. The chain is Glycine cleavage system H protein from Synechococcus sp. (strain CC9902).